A 468-amino-acid chain; its full sequence is Argininosuccinate lyase (468 aa).

Ser33, Asn121, and Thr166 together coordinate 2-(N(omega)-L-arginino)succinate. His167 (proton acceptor) is an active-site residue. Residue Ser288 is the Proton donor of the active site. The 2-(N(omega)-L-arginino)succinate site is built by Asn296, Tyr328, Gln333, and Lys336.

This sequence belongs to the lyase 1 family. Argininosuccinate lyase subfamily. In terms of assembly, homotetramer.

It catalyses the reaction 2-(N(omega)-L-arginino)succinate = fumarate + L-arginine. Its pathway is amino-acid biosynthesis; L-arginine biosynthesis; L-arginine from L-ornithine and carbamoyl phosphate: step 3/3. This chain is Argininosuccinate lyase (ARG4), found in Candida albicans (Yeast).